A 245-amino-acid chain; its full sequence is Probable phosphatase PMI1003 (245 aa).

Zn(2+) contacts are provided by His7, His9, His15, His40, Glu73, His101, His131, Asp192, and His194.

The protein belongs to the PHP family. As to quaternary structure, homotrimer. The cofactor is Zn(2+).

This chain is Probable phosphatase PMI1003, found in Proteus mirabilis (strain HI4320).